The following is a 383-amino-acid chain: Hippurate hydrolase (383 aa).

The protein belongs to the peptidase M20 family.

The catalysed reaction is N-benzoylglycine + H2O = benzoate + glycine. Cleaves hippuric acid into benzoic acid and glycine. The protein is Hippurate hydrolase of Campylobacter jejuni subsp. jejuni serotype O:2 (strain ATCC 700819 / NCTC 11168).